The primary structure comprises 125 residues: uncharacterized protein (125 aa).

In terms of domain architecture, Cupin type-2 spans 45–110; the sequence is IVPVGSKTLL…IGNVPLKILC (66 aa).

This is an uncharacterized protein from Methanocaldococcus jannaschii (strain ATCC 43067 / DSM 2661 / JAL-1 / JCM 10045 / NBRC 100440) (Methanococcus jannaschii).